Consider the following 579-residue polypeptide: Putative diflavin flavoprotein A 2 (579 aa).

The segment at 50 to 243 is zinc metallo-hydrolase; sequence QNGTTYNSYL…GKIKIIANGH (194 aa). Fe cation contacts are provided by histidine 99, glutamate 101, aspartate 103, histidine 166, aspartate 185, and histidine 243. The region spanning 272–460 is the Flavodoxin-like domain; that stretch reads VGLFYVADYG…MLASWVSQAS (189 aa). The tract at residues 461-579 is flavodoxin-reductase-like; sequence LQPLGFTIAV…VRHRKVGNYY (119 aa).

This sequence in the N-terminal section; belongs to the zinc metallo-hydrolase group 3 family. The protein in the C-terminal section; belongs to the flavodoxin reductase family. Fe cation serves as cofactor.

Its function is as follows. Mediates electron transfer from NADH to oxygen, reducing it to water. This modular protein has 3 redox cofactors, in other organisms the same activity requires 2 or 3 proteins. The protein is Putative diflavin flavoprotein A 2 (dfa2) of Nostoc sp. (strain PCC 7120 / SAG 25.82 / UTEX 2576).